Reading from the N-terminus, the 278-residue chain is Biotin synthase (278 aa).

The region spanning 1–227 (MQIMLCAISN…QSVVMVAGGR (227 aa)) is the Radical SAM core domain. [4Fe-4S] cluster contacts are provided by C16, C20, and C23. C60, C95, and C153 together coordinate [2Fe-2S] cluster.

This sequence belongs to the radical SAM superfamily. Biotin synthase family. Homodimer. It depends on [4Fe-4S] cluster as a cofactor. The cofactor is [2Fe-2S] cluster.

It carries out the reaction (4R,5S)-dethiobiotin + (sulfur carrier)-SH + 2 reduced [2Fe-2S]-[ferredoxin] + 2 S-adenosyl-L-methionine = (sulfur carrier)-H + biotin + 2 5'-deoxyadenosine + 2 L-methionine + 2 oxidized [2Fe-2S]-[ferredoxin]. Its pathway is cofactor biosynthesis; biotin biosynthesis; biotin from 7,8-diaminononanoate: step 2/2. Functionally, catalyzes the conversion of dethiobiotin (DTB) to biotin by the insertion of a sulfur atom into dethiobiotin via a radical-based mechanism. The polypeptide is Biotin synthase (Campylobacter jejuni subsp. jejuni serotype O:6 (strain 81116 / NCTC 11828)).